The sequence spans 244 residues: Phosphonates import ATP-binding protein PhnC (244 aa).

Positions 6 to 244 (IECHNLETAY…LQAQFVVNSQ (239 aa)) constitute an ABC transporter domain. 41 to 48 (GLNGAGKS) is a binding site for ATP.

Belongs to the ABC transporter superfamily. Phosphonates importer (TC 3.A.1.9.1) family. In terms of assembly, the complex is composed of two ATP-binding proteins (PhnC), two transmembrane proteins (PhnE) and a solute-binding protein (PhnD).

The protein localises to the cell inner membrane. It carries out the reaction phosphonate(out) + ATP + H2O = phosphonate(in) + ADP + phosphate + H(+). Functionally, part of the ABC transporter complex PhnCDE involved in phosphonates import. Responsible for energy coupling to the transport system. The chain is Phosphonates import ATP-binding protein PhnC from Trichormus variabilis (strain ATCC 29413 / PCC 7937) (Anabaena variabilis).